The following is a 107-amino-acid chain: Pro-corazonin (107 aa).

Positions 1–21 (MVNSQILILFILSLTITIVMC) are cleaved as a signal peptide. The residue at position 22 (Q22) is a Pyrrolidone carboxylic acid. N32 is modified (asparagine amide). The propeptide occupies 88–107 (SFSENMINDHRQPAPTNNNY).

It belongs to the corazonin family. In terms of tissue distribution, in the adult brain, expressed in four neurons of the lateral protocerebrum project axons towards the retrocerebral complex.

It is found in the secreted. Cardioactive peptide. Corazonin is probably involved in the physiological regulation of the heart beat. This is Pro-corazonin from Apis mellifera (Honeybee).